The chain runs to 263 residues: Antigen 10-3 (263 aa).

Residues 1 to 21 (MNIYLIGILCIVGLIISQGST) form the signal peptide. The interval 70-207 (GNKKDKQPTQ…QINDGTSDKP (138 aa)) is disordered. Residues 78 to 90 (TQKTTPKPTTPKQ) are compositionally biased toward low complexity. 5 consecutive repeat copies span residues 81 to 107 (TTPK…TIKR), 108 to 134 (TTPK…TIKR), 135 to 161 (TTPK…TIKR), 162 to 188 (TTPK…TIKR), and 189 to 206 (TTPK…TSDK). Residues 81 to 189 (TTPKPTTPKQ…TSDTHTIKRT (109 aa)) form a 5 X 27 AA tandem repeats region. Composition is skewed to basic and acidic residues over residues 95–104 (TSDKTSDTHT), 122–131 (TSDKTSDTHT), 149–158 (TSDKTSDTHT), and 176–185 (TSDKTSDTHT).

The polypeptide is Antigen 10-3 (Schistosoma mansoni (Blood fluke)).